A 404-amino-acid polypeptide reads, in one-letter code: Tryptophan synthase beta chain (404 aa).

K90 is subject to N6-(pyridoxal phosphate)lysine.

Belongs to the TrpB family. In terms of assembly, tetramer of two alpha and two beta chains. The cofactor is pyridoxal 5'-phosphate.

It catalyses the reaction (1S,2R)-1-C-(indol-3-yl)glycerol 3-phosphate + L-serine = D-glyceraldehyde 3-phosphate + L-tryptophan + H2O. The protein operates within amino-acid biosynthesis; L-tryptophan biosynthesis; L-tryptophan from chorismate: step 5/5. In terms of biological role, the beta subunit is responsible for the synthesis of L-tryptophan from indole and L-serine. This chain is Tryptophan synthase beta chain, found in Geobacillus thermodenitrificans (strain NG80-2).